Reading from the N-terminus, the 725-residue chain is Calcium-responsive transcription factor (725 aa).

Residues 572–592 (TSPDESPAVVSVNNQPSSSPS) are disordered. The segment covering 577 to 592 (SPAVVSVNNQPSSSPS) has biased composition (low complexity).

The protein resides in the nucleus. In terms of biological role, acts as a transcriptional activator that mediates the calcium- and neuron-selective induction of BDNF exon III transcription. Binds to the consensus calcium-response element CaRE1 5'-CTATTTCGAG-3' sequence. This Homo sapiens (Human) protein is Calcium-responsive transcription factor (CARF).